The chain runs to 401 residues: Chorismate synthase (401 aa).

NADP(+) contacts are provided by Arg-40 and Arg-46. FMN-binding positions include Arg-135–Ser-137, Gln-256–Ala-257, Gly-300, Lys-315–Thr-319, and Arg-341.

This sequence belongs to the chorismate synthase family. In terms of assembly, homotetramer. Requires FMNH2 as cofactor.

The catalysed reaction is 5-O-(1-carboxyvinyl)-3-phosphoshikimate = chorismate + phosphate. It participates in metabolic intermediate biosynthesis; chorismate biosynthesis; chorismate from D-erythrose 4-phosphate and phosphoenolpyruvate: step 7/7. In terms of biological role, catalyzes the anti-1,4-elimination of the C-3 phosphate and the C-6 proR hydrogen from 5-enolpyruvylshikimate-3-phosphate (EPSP) to yield chorismate, which is the branch point compound that serves as the starting substrate for the three terminal pathways of aromatic amino acid biosynthesis. This reaction introduces a second double bond into the aromatic ring system. This chain is Chorismate synthase, found in Mycobacterium bovis (strain BCG / Pasteur 1173P2).